We begin with the raw amino-acid sequence, 177 residues long: Peptidyl-tRNA hydrolase 1 (177 aa).

Position 18 (Tyr-18) interacts with tRNA. The active-site Proton acceptor is His-23. Phe-65, Asn-67, and Asn-113 together coordinate tRNA.

The protein belongs to the PTH family. Monomer.

Its subcellular location is the cytoplasm. It carries out the reaction an N-acyl-L-alpha-aminoacyl-tRNA + H2O = an N-acyl-L-amino acid + a tRNA + H(+). In terms of biological role, hydrolyzes ribosome-free peptidyl-tRNAs (with 1 or more amino acids incorporated), which drop off the ribosome during protein synthesis, or as a result of ribosome stalling. Its function is as follows. Catalyzes the release of premature peptidyl moieties from peptidyl-tRNA molecules trapped in stalled 50S ribosomal subunits, and thus maintains levels of free tRNAs and 50S ribosomes. The chain is Peptidyl-tRNA hydrolase 1 from Corynebacterium glutamicum (strain ATCC 13032 / DSM 20300 / JCM 1318 / BCRC 11384 / CCUG 27702 / LMG 3730 / NBRC 12168 / NCIMB 10025 / NRRL B-2784 / 534).